The primary structure comprises 254 residues: Triosephosphate isomerase (254 aa).

Residue 12–14 participates in substrate binding; the sequence is NWK. Histidine 99 functions as the Electrophile in the catalytic mechanism. Glutamate 169 acts as the Proton acceptor in catalysis. Residues glycine 175, serine 214, and 235-236 each bind substrate; that span reads GG.

The protein belongs to the triosephosphate isomerase family. Homodimer.

The protein localises to the cytoplasm. The enzyme catalyses D-glyceraldehyde 3-phosphate = dihydroxyacetone phosphate. The protein operates within carbohydrate biosynthesis; gluconeogenesis. It participates in carbohydrate degradation; glycolysis; D-glyceraldehyde 3-phosphate from glycerone phosphate: step 1/1. Involved in the gluconeogenesis. Catalyzes stereospecifically the conversion of dihydroxyacetone phosphate (DHAP) to D-glyceraldehyde-3-phosphate (G3P). In Bartonella bacilliformis (strain ATCC 35685 / KC583 / Herrer 020/F12,63), this protein is Triosephosphate isomerase.